We begin with the raw amino-acid sequence, 348 residues long: Bifunctional nitrilase/nitrile hydratase NIT4B (348 aa).

In terms of domain architecture, CN hydrolase spans 29-300 (VRATVVQAST…EALISADLDL (272 aa)). The Proton acceptor role is filled by E69. K156 acts as the Proton donor in catalysis. C190 serves as the catalytic Nucleophile.

The protein belongs to the carbon-nitrogen hydrolase superfamily. Nitrilase family. In terms of tissue distribution, expressed in roots, stems, cotyledons, leaves and flowers.

The catalysed reaction is a nitrile + 2 H2O = a carboxylate + NH4(+). It catalyses the reaction 3-cyano-L-alanine + 2 H2O = L-aspartate + NH4(+). Highly specific for beta-cyano-L-alanine (Ala(CN)). Low activity with 3-phenylpropionitrile (PPN). Not associated with auxin production but may be involved in cyanide detoxification. The chain is Bifunctional nitrilase/nitrile hydratase NIT4B (NIT4B) from Nicotiana tabacum (Common tobacco).